Here is a 112-residue protein sequence, read N- to C-terminus: MSNIYDLANELSRNLRELPEYKAVAESKKAVDADSEAKAIFTDYLAFQQELQQLAQTGQVPTQEVQDKMTSFGEKIQGNAVLSEFFNKQQQLSIYLADIERIIFDPVQDLLK.

It belongs to the UPF0342 family.

The polypeptide is UPF0342 protein SSA_1465 (Streptococcus sanguinis (strain SK36)).